The sequence spans 904 residues: Protein translocase subunit SecA (904 aa).

ATP-binding positions include Q89, 107 to 111 (GEGKT), and D502. Residues 872 to 892 (VESDPTTWGEPSRNDPCPCGS) form a disordered region. Zn(2+) contacts are provided by C888, C890, C899, and H900.

It belongs to the SecA family. In terms of assembly, part of the essential protein translocation apparatus which comprises SecA, SecYEG and auxiliary proteins SecDF-YajC and YidC. Homodimer. The cofactor is Zn(2+).

Its subcellular location is the cell inner membrane. It is found in the cytoplasm. It catalyses the reaction ATP + H2O + cellular proteinSide 1 = ADP + phosphate + cellular proteinSide 2.. Functionally, part of the Sec protein translocase complex. Interacts with the SecYEG preprotein conducting channel. Has a central role in coupling the hydrolysis of ATP to the transfer of proteins into and across the cell membrane, serving both as a receptor for the preprotein-SecB complex and as an ATP-driven molecular motor driving the stepwise translocation of polypeptide chains across the membrane. This chain is Protein translocase subunit SecA, found in Rhodobacter capsulatus (Rhodopseudomonas capsulata).